Reading from the N-terminus, the 200-residue chain is Histone chaperone asf1a-B (200 aa).

The protein belongs to the ASF1 family. As to quaternary structure, interacts with histone H3 (including both histone H3.1 and H3.3) and histone H4.

The protein localises to the nucleus. In terms of biological role, histone chaperone that facilitates histone deposition and histone exchange and removal during nucleosome assembly and disassembly. This chain is Histone chaperone asf1a-B (asf1ab), found in Xenopus laevis (African clawed frog).